The sequence spans 707 residues: Dendrin (707 aa).

Disordered stretches follow at residues 1-22 (MLDG…DEES), 67-86 (QNRT…RRPW), 94-195 (ATNW…PWGG), 213-273 (AGTA…KKRL), and 342-377 (TEVA…GSEE). Residues 103–134 (AEVRAREQEKRKAASQEREAKETERKRRKAGG) are a coiled coil. Positions 105–127 (VRAREQEKRKAASQEREAKETER) are enriched in basic and acidic residues. A nuclear localization region spans residues 113–131 (RKAASQEREAKETERKRRK). Residues 186–236 (GVAWAGPWGGRRPGPPSYEAHLLLRGAAGTAPRRRWDRPPPYVAPPSYEGP) form an interaction with MAGI2 region. Positions 340–434 (PVTEVALSGS…LEVWKVTRRA (95 aa)) are interaction with ACTN1. Basic residues predominate over residues 359 to 369 (PRSRQHLRGSR). Ser-387 carries the phosphoserine modification. Disordered stretches follow at residues 389–421 (KKPP…EGTE) and 517–707 (RVLN…GKRE). Positions 406–707 (GGTGWKESLG…TRKTPQGKRE (302 aa)) are interaction with CD2AP and NPHS1. Basic and acidic residues-rich tracts occupy residues 524–544 (EGRE…EERS) and 692–707 (GLVR…GKRE).

Forms a ternary complex with MAGI2 and SH3KBP1; recruits DDN to the cytoplasm. Interacts with MAGI1. Interacts with ACTN1 and may interact with WWC1. Interacts with the podocyte slit diaphragm proteins CD2AP, NPHS1 and NPHS2; the interaction with CD2AP and NPHS1 is direct. As to expression, specifically expressed in forebrain structures, particularly in neocortex, olfactory bulb, hippocampus, caudate-putamen, and limbic system (at protein level). Also detected in spleen, liver, kidney and placenta (at protein level).

The protein resides in the cell projection. The protein localises to the dendritic spine membrane. Its subcellular location is the cytoplasm. It localises to the endoplasmic reticulum membrane. It is found in the perikaryon. The protein resides in the nucleus. Promotes apoptosis of kidney glomerular podocytes. Podocytes are highly specialized cells essential to the ultrafiltration of blood, resulting in the extraction of urine and the retention of protein. This chain is Dendrin (Ddn), found in Rattus norvegicus (Rat).